The primary structure comprises 202 residues: 3-isopropylmalate dehydratase small subunit (202 aa).

This sequence belongs to the LeuD family. LeuD type 1 subfamily. Heterodimer of LeuC and LeuD.

The enzyme catalyses (2R,3S)-3-isopropylmalate = (2S)-2-isopropylmalate. The protein operates within amino-acid biosynthesis; L-leucine biosynthesis; L-leucine from 3-methyl-2-oxobutanoate: step 2/4. Its function is as follows. Catalyzes the isomerization between 2-isopropylmalate and 3-isopropylmalate, via the formation of 2-isopropylmaleate. The chain is 3-isopropylmalate dehydratase small subunit from Nocardia farcinica (strain IFM 10152).